We begin with the raw amino-acid sequence, 21 residues long: Putative pancreatic polypeptide 2 (21 aa).

Belongs to the NPY family.

The chain is Putative pancreatic polypeptide 2 (PPY2P) from Homo sapiens (Human).